An 89-amino-acid chain; its full sequence is Small ribosomal subunit protein uS15 (89 aa).

Belongs to the universal ribosomal protein uS15 family. Part of the 30S ribosomal subunit. Forms a bridge to the 50S subunit in the 70S ribosome, contacting the 23S rRNA.

One of the primary rRNA binding proteins, it binds directly to 16S rRNA where it helps nucleate assembly of the platform of the 30S subunit by binding and bridging several RNA helices of the 16S rRNA. In terms of biological role, forms an intersubunit bridge (bridge B4) with the 23S rRNA of the 50S subunit in the ribosome. This Cereibacter sphaeroides (strain ATCC 17025 / ATH 2.4.3) (Rhodobacter sphaeroides) protein is Small ribosomal subunit protein uS15.